The primary structure comprises 293 residues: Protease HtpX homolog (293 aa).

2 consecutive transmembrane segments (helical) span residues 5–25 (IFLF…TLRL) and 43–63 (ALLV…LAMS). His-148 serves as a coordination point for Zn(2+). The active site involves Glu-149. His-152 contributes to the Zn(2+) binding site. Transmembrane regions (helical) follow at residues 159–179 (VTLA…SRII) and 199–219 (FVTS…IVMW). A Zn(2+)-binding site is contributed by Glu-225.

The protein belongs to the peptidase M48B family. Zn(2+) serves as cofactor.

It localises to the cell inner membrane. The sequence is that of Protease HtpX homolog from Nitrosomonas europaea (strain ATCC 19718 / CIP 103999 / KCTC 2705 / NBRC 14298).